The following is a 396-amino-acid chain: Septu protein PtuA (396 aa).

In terms of biological role, component of antiviral defense system Septu type I, composed of PtuA and PtuB. Expression of Septu type I in B.subtilis (strain BEST7003) confers resistance to phages SBSphiC and SBSphiJ. May be an ATPase. This is Septu protein PtuA from Bacillus thuringiensis.